Consider the following 261-residue polypeptide: Syntaxin-7 (261 aa).

S2 bears the N-acetylserine mark. At 2-238 the chain is on the cytoplasmic side; it reads SYTPGVGGDP…DYQRKSRKTL (237 aa). The residue at position 4 (T4) is a Phosphothreonine. Position 45 is a phosphoserine (S45). The stretch at 47–69 forms a coiled coil; it reads ELRQQLQQKQQYTNQLTKETDKY. S75 bears the Phosphoserine mark. T79 bears the Phosphothreonine mark. Phosphoserine occurs at positions 125, 126, 129, and 205. The segment at 129–148 is disordered; sequence SGSFPEDSSKERNLVSWESQ. A t-SNARE coiled-coil homology domain is found at 165–227; it reads LRLIHERESS…QQANQQLSRA (63 aa). The helical; Anchor for type IV membrane protein transmembrane segment at 239–259 threads the bilayer; the sequence is CIIILILVIGVVIIGLIIWGL. Topologically, residues 260–261 are vesicular; that stretch reads NR.

It belongs to the syntaxin family. Forms a SNARE complex with VTI1B, STX8 and VAMP8 which functions in the homotypic fusion of late endosomes. Component of the SNARE complex composed of STX7, STX8, VAMP7 and VTI1B that is required for heterotypic fusion of late endosomes with lysosomes. Interacts with VPS11, VPS16 and VPS18. Interacts with VPS33A. Interacts with TPC1.

It is found in the early endosome membrane. Functionally, may be involved in protein trafficking from the plasma membrane to the early endosome (EE) as well as in homotypic fusion of endocytic organelles. Mediates the endocytic trafficking from early endosomes to late endosomes and lysosomes. This Pongo abelii (Sumatran orangutan) protein is Syntaxin-7 (STX7).